A 210-amino-acid chain; its full sequence is Thymidylate kinase (210 aa).

10–17 (GLEGAGKS) is a binding site for ATP.

The protein belongs to the thymidylate kinase family.

The catalysed reaction is dTMP + ATP = dTDP + ADP. Its function is as follows. Phosphorylation of dTMP to form dTDP in both de novo and salvage pathways of dTTP synthesis. This chain is Thymidylate kinase, found in Haemophilus influenzae (strain PittGG).